The primary structure comprises 266 residues: MAPSKWDDEEESVSPPPVVARRKFDDEEEEDVLDSWDAAEDSEVEREKAAKAAEAKAKAEAEAAANKKSKAQRIQEKKAQRKADADAEDSDDSDEDEAERRARLRKTEKDADLKHAEDLFGDIDLNRMRNRSAPKAVVISDGTDPTQAVDLSAMPLFKPATKDQFTRVTTTLIPLLTTQSKKPQYALWAQDFIKQLVKDLPSGDVKKIASSLTTLSNEKMKEERAADKGNKKTKAAKTKVSLVTSRENKIETNSYDDDGLDDDDFM.

Disordered stretches follow at residues 1–111 (MAPS…EKDA) and 217–266 (NEKM…DDFM). A compositionally biased stretch (acidic residues) spans 26-44 (DEEEEDVLDSWDAAEDSEV). Residues 40–82 (EDSEVEREKAAKAAEAKAKAEAEAAANKKSKAQRIQEKKAQRK) adopt a coiled-coil conformation. Basic and acidic residues-rich tracts occupy residues 45–61 (EREK…KAEA) and 73–85 (RIQE…KADA). Residues 86–97 (DAEDSDDSDEDE) show a composition bias toward acidic residues. Composition is skewed to basic and acidic residues over residues 98–111 (AERR…EKDA) and 218–230 (EKMK…DKGN). A compositionally biased stretch (acidic residues) spans 254 to 266 (SYDDDGLDDDDFM).

It belongs to the eIF-3 subunit J family. As to quaternary structure, component of the eukaryotic translation initiation factor 3 (eIF-3) complex.

It localises to the cytoplasm. Its function is as follows. Component of the eukaryotic translation initiation factor 3 (eIF-3) complex, which is involved in protein synthesis of a specialized repertoire of mRNAs and, together with other initiation factors, stimulates binding of mRNA and methionyl-tRNAi to the 40S ribosome. The eIF-3 complex specifically targets and initiates translation of a subset of mRNAs involved in cell proliferation. The polypeptide is Eukaryotic translation initiation factor 3 subunit J (hcr1) (Aspergillus niger (strain ATCC MYA-4892 / CBS 513.88 / FGSC A1513)).